Reading from the N-terminus, the 171-residue chain is uncharacterized protein (171 aa).

Residues 1 to 20 (MRDFYLFLGAVFLLVLGVWA) form the signal peptide.

This is an uncharacterized protein from Aquifex aeolicus (strain VF5).